Reading from the N-terminus, the 193-residue chain is Pyridoxal 5'-phosphate synthase subunit PdxT (193 aa).

Residue 48 to 50 (GES) participates in L-glutamine binding. C80 functions as the Nucleophile in the catalytic mechanism. L-glutamine is bound by residues R107 and 136–137 (IR). Catalysis depends on charge relay system residues H172 and E174.

This sequence belongs to the glutaminase PdxT/SNO family. In terms of assembly, in the presence of PdxS, forms a dodecamer of heterodimers. Only shows activity in the heterodimer.

It catalyses the reaction aldehydo-D-ribose 5-phosphate + D-glyceraldehyde 3-phosphate + L-glutamine = pyridoxal 5'-phosphate + L-glutamate + phosphate + 3 H2O + H(+). The enzyme catalyses L-glutamine + H2O = L-glutamate + NH4(+). Its pathway is cofactor biosynthesis; pyridoxal 5'-phosphate biosynthesis. In terms of biological role, catalyzes the hydrolysis of glutamine to glutamate and ammonia as part of the biosynthesis of pyridoxal 5'-phosphate. The resulting ammonia molecule is channeled to the active site of PdxS. The polypeptide is Pyridoxal 5'-phosphate synthase subunit PdxT (Clostridium botulinum (strain Loch Maree / Type A3)).